Here is a 379-residue protein sequence, read N- to C-terminus: Chaperone protein DnaJ (379 aa).

The region spanning 6 to 71 (DYYEVLGVDK…QKRSRYDQFG (66 aa)) is the J domain. Residues 138 to 220 (GVEREINVSK…CNGKGRLRST (83 aa)) form a CR-type zinc finger. Positions 151, 154, 168, 171, 194, 197, 208, and 211 each coordinate Zn(2+). CXXCXGXG motif repeat units follow at residues 151-158 (CSKCTGSG), 168-175 (CNHCNGTG), 194-201 (CDACKGEG), and 208-215 (CPACNGKG).

This sequence belongs to the DnaJ family. As to quaternary structure, homodimer. Zn(2+) is required as a cofactor.

It localises to the cytoplasm. Its function is as follows. Participates actively in the response to hyperosmotic and heat shock by preventing the aggregation of stress-denatured proteins and by disaggregating proteins, also in an autonomous, DnaK-independent fashion. Unfolded proteins bind initially to DnaJ; upon interaction with the DnaJ-bound protein, DnaK hydrolyzes its bound ATP, resulting in the formation of a stable complex. GrpE releases ADP from DnaK; ATP binding to DnaK triggers the release of the substrate protein, thus completing the reaction cycle. Several rounds of ATP-dependent interactions between DnaJ, DnaK and GrpE are required for fully efficient folding. Also involved, together with DnaK and GrpE, in the DNA replication of plasmids through activation of initiation proteins. The sequence is that of Chaperone protein DnaJ from Ruminiclostridium cellulolyticum (strain ATCC 35319 / DSM 5812 / JCM 6584 / H10) (Clostridium cellulolyticum).